The sequence spans 180 residues: 6,7-dimethyl-8-ribityllumazine synthase (180 aa).

5-amino-6-(D-ribitylamino)uracil contacts are provided by residues Phe23, 61–63 (SFE), and 85–87 (AVI). 90 to 91 (QT) contacts (2S)-2-hydroxy-3-oxobutyl phosphate. The Proton donor role is filled by His93. Residue Phe118 coordinates 5-amino-6-(D-ribitylamino)uracil. Arg132 contributes to the (2S)-2-hydroxy-3-oxobutyl phosphate binding site.

This sequence belongs to the DMRL synthase family.

It catalyses the reaction (2S)-2-hydroxy-3-oxobutyl phosphate + 5-amino-6-(D-ribitylamino)uracil = 6,7-dimethyl-8-(1-D-ribityl)lumazine + phosphate + 2 H2O + H(+). It functions in the pathway cofactor biosynthesis; riboflavin biosynthesis; riboflavin from 2-hydroxy-3-oxobutyl phosphate and 5-amino-6-(D-ribitylamino)uracil: step 1/2. In terms of biological role, catalyzes the formation of 6,7-dimethyl-8-ribityllumazine by condensation of 5-amino-6-(D-ribitylamino)uracil with 3,4-dihydroxy-2-butanone 4-phosphate. This is the penultimate step in the biosynthesis of riboflavin. The polypeptide is 6,7-dimethyl-8-ribityllumazine synthase (Gloeobacter violaceus (strain ATCC 29082 / PCC 7421)).